Here is a 118-residue protein sequence, read N- to C-terminus: Non-specific lipid-transfer protein 2 (118 aa).

The first 25 residues, 1–25, serve as a signal peptide directing secretion; that stretch reads MARGMKLACVVLVICMVVIAPMAEG. 4 cysteine pairs are disulfide-bonded: C29/C76, C39/C53, C54/C99, and C74/C113.

This sequence belongs to the plant LTP family.

In terms of biological role, plant non-specific lipid-transfer proteins transfer phospholipids as well as galactolipids across membranes. May play a role in wax or cutin deposition in the cell walls of expanding epidermal cells and certain secretory tissues. Binds saturated fatty acids, jasmonic acid and, with highest efficiency, unsaturated fatty acids and lysolipids. The protein is Non-specific lipid-transfer protein 2 of Lens culinaris (Lentil).